We begin with the raw amino-acid sequence, 280 residues long: Dexamethasone-induced Ras-related protein 1 (280 aa).

Position 11 is an S-nitrosocysteine (C11). 31 to 38 (GSSKVGKT) provides a ligand contact to GTP. Residues 53–61 (YTPTIEDFH) carry the Effector region motif. GTP is bound by residues 78 to 82 (DTSGN) and 145 to 148 (NKGD). At C277 the chain carries Cysteine methyl ester. C277 carries the S-farnesyl cysteine lipid modification. Positions 278–280 (VIS) are cleaved as a propeptide — removed in mature form.

This sequence belongs to the small GTPase superfamily. RasD family. In terms of assembly, component of a complex, at least composed of APBB1, RASD1/DEXRAS1 and APP. Interacts with APBB1/FE65. Forms a ternary complex with CAPON and NOS1. In terms of processing, S-nitrosylation stimulates guanine-nucleotide exchange activity. Expressed in brain, heart, kidney and liver.

It is found in the cell membrane. Its subcellular location is the cytoplasm. The protein resides in the perinuclear region. It localises to the nucleus. In terms of biological role, small GTPase. Negatively regulates the transcription regulation activity of the APBB1/FE65-APP complex via its interaction with APBB1/FE65. The polypeptide is Dexamethasone-induced Ras-related protein 1 (Rasd1) (Mus musculus (Mouse)).